Consider the following 193-residue polypeptide: Acyl carrier protein phosphodiesterase (193 aa).

This sequence belongs to the AcpH family.

The enzyme catalyses holo-[ACP] + H2O = apo-[ACP] + (R)-4'-phosphopantetheine + H(+). In terms of biological role, converts holo-ACP to apo-ACP by hydrolytic cleavage of the phosphopantetheine prosthetic group from ACP. This is Acyl carrier protein phosphodiesterase from Escherichia coli O157:H7.